We begin with the raw amino-acid sequence, 194 residues long: Probable chorismate pyruvate-lyase (194 aa).

3 residues coordinate substrate: Arg77, Leu115, and Glu176.

This sequence belongs to the UbiC family.

The protein localises to the cytoplasm. The catalysed reaction is chorismate = 4-hydroxybenzoate + pyruvate. Its pathway is cofactor biosynthesis; ubiquinone biosynthesis. Removes the pyruvyl group from chorismate, with concomitant aromatization of the ring, to provide 4-hydroxybenzoate (4HB) for the ubiquinone pathway. In Cupriavidus pinatubonensis (strain JMP 134 / LMG 1197) (Cupriavidus necator (strain JMP 134)), this protein is Probable chorismate pyruvate-lyase.